The sequence spans 326 residues: Peroxidase 1 (326 aa).

Residues 1–22 (MASSRVILALLLAAAAVMASSA) form the signal peptide. Pyrrolidone carboxylic acid is present on Gln23. 4 cysteine pairs are disulfide-bonded: Cys33/Cys112, Cys66/Cys71, Cys118/Cys322, and Cys196/Cys231. His64 serves as the catalytic Proton acceptor. Ca(2+)-binding residues include Asp65, Val68, Gly70, Asp72, and Ser74. 2 N-linked (GlcNAc...) asparagine glycosylation sites follow: Asn82 and Asn153. Pro159 contacts substrate. Asn164 is a glycosylation site (N-linked (GlcNAc...) asparagine). Position 189 (His189) interacts with heme b. Residue Thr190 participates in Ca(2+) binding. 2 N-linked (GlcNAc...) asparagine glycosylation sites follow: Asn205 and Asn237. Ca(2+) contacts are provided by Asp244, Ser247, and Asp252.

This sequence belongs to the peroxidase family. Classical plant (class III) peroxidase subfamily. Requires Ca(2+) as cofactor. Heme b serves as cofactor.

The protein resides in the secreted. It carries out the reaction 2 a phenolic donor + H2O2 = 2 a phenolic radical donor + 2 H2O. Removal of H(2)O(2), oxidation of toxic reductants, biosynthesis and degradation of lignin, suberization, auxin catabolism, response to environmental stresses such as wounding, pathogen attack and oxidative stress. These functions might be dependent on each isozyme/isoform in each plant tissue. The chain is Peroxidase 1 (PRX74) from Oryza sativa subsp. japonica (Rice).